The chain runs to 342 residues: L-threonine 3-dehydrogenase (342 aa).

Zn(2+) is bound at residue cysteine 38. Active-site charge relay system residues include threonine 40 and histidine 43. Residues histidine 63, glutamate 64, cysteine 93, cysteine 96, cysteine 99, and cysteine 107 each contribute to the Zn(2+) site. NAD(+) is bound by residues isoleucine 175, aspartate 195, arginine 200, 262-264, and 286-287; these read LGI and IY.

Belongs to the zinc-containing alcohol dehydrogenase family. In terms of assembly, homotetramer. The cofactor is Zn(2+).

Its subcellular location is the cytoplasm. The catalysed reaction is L-threonine + NAD(+) = (2S)-2-amino-3-oxobutanoate + NADH + H(+). The protein operates within amino-acid degradation; L-threonine degradation via oxydo-reductase pathway; glycine from L-threonine: step 1/2. Functionally, catalyzes the NAD(+)-dependent oxidation of L-threonine to 2-amino-3-ketobutyrate. This chain is L-threonine 3-dehydrogenase, found in Burkholderia ambifaria (strain ATCC BAA-244 / DSM 16087 / CCUG 44356 / LMG 19182 / AMMD) (Burkholderia cepacia (strain AMMD)).